The chain runs to 618 residues: Ubiquitin carboxyl-terminal hydrolase 2 (618 aa).

Residues 1–213 are necessary for interaction with MDM4; that stretch reads MSQLSSTLKR…RSEYLTDYLE (213 aa). Disordered stretches follow at residues 54 to 112 and 246 to 274; these read VSPT…GGSG and RYTL…MNSK. Over residues 90 to 100 the composition is skewed to basic and acidic residues; that stretch reads KRSESQTRGNE. The segment covering 255 to 274 has biased composition (polar residues); sequence GQASGPSRSTSPGRDTMNSK. A USP domain is found at 280–612; sequence AGLRNLGNTC…DAYLLFYELA (333 aa). Cysteine 289 functions as the Nucleophile in the catalytic mechanism. The segment at 416–516 is necessary for interaction with MDM4; that stretch reads YLEREDSRIG…FPKILVLHLK (101 aa). Zn(2+)-binding residues include cysteine 438, cysteine 441, cysteine 489, and cysteine 492. The active-site Proton acceptor is histidine 570.

It belongs to the peptidase C19 family. USP2 subfamily. Homooligomer. Found in trimeric complex with MDM2 and MDM4 and USP2. Interacts with CCND1; the interaction is direct and promotes its stabilization by antagonizing ubiquitin-dependent degradation. Interacts (via N-terminus and C-terminus) with MDM2. Interacts with MDM4. Interacts with PER1. Interacts with KCNQ1; counteracts the NEDD4L-specific down-regulation of I(Ks) and restores plasma membrane localization of KCNQ1. Isoform 4: Interacts with NHERF4 and CLTC. As to expression, expressed in mesangial cells of the kidney. Isoform 1 and isoform 2 are expressed in elongated spermatids; the shorter form appearing earlier than the longer form (at protein level). Isoform 1 and isoform 2 are expressed in early round spermatids of the testis. Isoform 1 is expressed in muscle and heart. Isoform 2 is expressed in muscle, lung, heart, brain, liver and ovary. During muscle differentiation, isoform 1 expression increases before the onset of membrane fusion and decreases as the myogenic processes proceeded; un counterpart, isoform 2 expression remains low until the burst of membrane fusion but increases thereafter.

The protein localises to the cytoplasm. The protein resides in the perinuclear region. It localises to the nucleus. It is found in the membrane. It carries out the reaction Thiol-dependent hydrolysis of ester, thioester, amide, peptide and isopeptide bonds formed by the C-terminal Gly of ubiquitin (a 76-residue protein attached to proteins as an intracellular targeting signal).. Cleavage is inhibited by ubiquitin in a dosage-dependent manner. Cleavage is blocked by ubiquitin aldehyde. Functionally, hydrolase that deubiquitinates polyubiquitinated target proteins such as MDM2, MDM4 and CCND1. Isoform 1 and isoform 2 possess both ubiquitin-specific peptidase and isopeptidase activities. Deubiquitinates MDM2 without reversing MDM2-mediated p53/TP53 ubiquitination and thus indirectly promotes p53/TP53 degradation and limits p53 activity. Has no deubiquitinase activity against p53/TP53. Prevents MDM2-mediated degradation of MDM4. Plays a role in the G1/S cell-cycle progression in normal and cancer cells. Regulates the circadian clock by modulating its intrinsic circadian rhythm and its capacity to respond to external cues. Associates with clock proteins and deubiquitinates core clock component PER1 but does not affect its overall stability. Regulates the nucleocytoplasmic shuttling and nuclear retention of PER1 and its repressive role on the clock transcription factors CLOCK and BMAL1. Plays a role in the regulation of myogenic differentiation of embryonic muscle cells. In terms of biological role, circadian clock output effector that regulates Ca(2+) absorption in the small intestine. Probably functions by regulating protein levels of the membrane scaffold protein NHERF4 in a rhythmic manner, and is therefore likely to control Ca(2+) membrane permeability mediated by the Ca(2+) channel TRPV6 in the intestine. The polypeptide is Ubiquitin carboxyl-terminal hydrolase 2 (Usp2) (Rattus norvegicus (Rat)).